Reading from the N-terminus, the 230-residue chain is Sugar fermentation stimulation protein homolog (230 aa).

This sequence belongs to the SfsA family.

The polypeptide is Sugar fermentation stimulation protein homolog (Clostridium botulinum (strain Alaska E43 / Type E3)).